Reading from the N-terminus, the 56-residue chain is Preprotein translocase subunit SecG (56 aa).

The Cytoplasmic segment spans residues methionine 1–serine 29. A helical transmembrane segment spans residues proline 30 to methionine 49. At phenylalanine 50–glycine 56 the chain is on the extracellular side.

This sequence belongs to the SEC61-beta family. As to quaternary structure, component of the protein translocase complex. Heterotrimer consisting of alpha (SecY), beta (SecG) and gamma (SecE) subunits. Can form oligomers of the heterotrimer.

It localises to the cell membrane. Functionally, involved in protein export. The function of the beta subunit is unknown, but it may be involved in stabilization of the trimeric complex. In Thermococcus kodakarensis (strain ATCC BAA-918 / JCM 12380 / KOD1) (Pyrococcus kodakaraensis (strain KOD1)), this protein is Preprotein translocase subunit SecG.